The sequence spans 103 residues: Large ribosomal subunit protein bL21 (103 aa).

This sequence belongs to the bacterial ribosomal protein bL21 family. Part of the 50S ribosomal subunit. Contacts protein L20.

Its function is as follows. This protein binds to 23S rRNA in the presence of protein L20. The chain is Large ribosomal subunit protein bL21 from Chromobacterium violaceum (strain ATCC 12472 / DSM 30191 / JCM 1249 / CCUG 213 / NBRC 12614 / NCIMB 9131 / NCTC 9757 / MK).